A 201-amino-acid chain; its full sequence is FMN-dependent NADH:quinone oxidoreductase (201 aa).

Residue 92–95 coordinates FMN; it reads MWNL.

This sequence belongs to the azoreductase type 1 family. As to quaternary structure, homodimer. FMN serves as cofactor.

The enzyme catalyses 2 a quinone + NADH + H(+) = 2 a 1,4-benzosemiquinone + NAD(+). It carries out the reaction N,N-dimethyl-1,4-phenylenediamine + anthranilate + 2 NAD(+) = 2-(4-dimethylaminophenyl)diazenylbenzoate + 2 NADH + 2 H(+). Its function is as follows. Quinone reductase that provides resistance to thiol-specific stress caused by electrophilic quinones. In terms of biological role, also exhibits azoreductase activity. Catalyzes the reductive cleavage of the azo bond in aromatic azo compounds to the corresponding amines. This Caldicellulosiruptor saccharolyticus (strain ATCC 43494 / DSM 8903 / Tp8T 6331) protein is FMN-dependent NADH:quinone oxidoreductase.